The following is a 624-amino-acid chain: Membrane protein insertase YidC (624 aa).

The chain crosses the membrane as a helical span at residues 8–28 (MIIAIALSLAVLLGWNYFVTA). A disordered region spans residues 36–95 (QQQAAQVNPSQGVNPSQGVDPSQGVNASPSPKEGGPSAPVPGTLPGAAGGSPQAALARDE). Positions 43–64 (NPSQGVNPSQGVDPSQGVNASP) are enriched in polar residues. Transmembrane regions (helical) follow at residues 370–390 (FDLL…FKAL), 396–416 (LFGN…LFFL), 470–490 (WPVL…FVTI), 526–542 (LLHL…TMFL), and 559–579 (FTFM…GLVI).

Belongs to the OXA1/ALB3/YidC family. Type 1 subfamily. In terms of assembly, interacts with the Sec translocase complex via SecD. Specifically interacts with transmembrane segments of nascent integral membrane proteins during membrane integration.

It localises to the cell inner membrane. Required for the insertion and/or proper folding and/or complex formation of integral membrane proteins into the membrane. Involved in integration of membrane proteins that insert both dependently and independently of the Sec translocase complex, as well as at least some lipoproteins. Aids folding of multispanning membrane proteins. This Methylobacterium sp. (strain 4-46) protein is Membrane protein insertase YidC.